A 305-amino-acid polypeptide reads, in one-letter code: Ribosomal RNA small subunit methyltransferase H (305 aa).

Residues 46-48 (GGH), Asp-65, Phe-92, Asp-108, and His-115 each bind S-adenosyl-L-methionine.

The protein belongs to the methyltransferase superfamily. RsmH family.

It is found in the cytoplasm. It carries out the reaction cytidine(1402) in 16S rRNA + S-adenosyl-L-methionine = N(4)-methylcytidine(1402) in 16S rRNA + S-adenosyl-L-homocysteine + H(+). Functionally, specifically methylates the N4 position of cytidine in position 1402 (C1402) of 16S rRNA. The sequence is that of Ribosomal RNA small subunit methyltransferase H from Trichormus variabilis (strain ATCC 29413 / PCC 7937) (Anabaena variabilis).